Here is a 260-residue protein sequence, read N- to C-terminus: Serine/threonine-protein acetyltransferase NGR_a02610 (260 aa).

Catalysis depends on residues His-123 and Glu-143. Residue His-123 participates in CoA binding. 180–181 contributes to the CoA binding site; that stretch reads KS. Cys-185 is a catalytic residue.

This sequence belongs to the acetyltransferase YopJ family.

It carries out the reaction L-threonyl-[protein] + acetyl-CoA = O-acetyl-L-threonyl-[protein] + CoA. The catalysed reaction is L-seryl-[protein] + acetyl-CoA = O-acetyl-L-seryl-[protein] + CoA. Serine/threonine-protein acetyltransferase translocated into infected cells, which mediates acetylation of serine and threonine residues of host target proteins. The polypeptide is Serine/threonine-protein acetyltransferase NGR_a02610 (Sinorhizobium fredii (strain NBRC 101917 / NGR234)).